A 203-amino-acid chain; its full sequence is MEECKGGGMSPSSSMDSSTHPALSTTSSAATARRDLSTDLRLGLSLSTSSSSSLLQAAAAAAAADDSIPSTPRNSQVHADWPPIKPFLRSALQKASAAGGGGARRRRTLFVKVYMEGVPIGRKLDLLLLDGYDSLLIKLCHMFKTPITYADVMECHQQVPGQKAAHVLTYEDQDGDWMMVGDVPWELFLSSVKKLRIARMDKC.

A disordered region spans residues 1-31 (MEECKGGGMSPSSSMDSSTHPALSTTSSAAT). Over residues 10–31 (SPSSSMDSSTHPALSTTSSAAT) the composition is skewed to low complexity. Positions 40–44 (LRLGL) match the EAR-like (transcriptional repression) motif. In terms of domain architecture, PB1 spans 108–202 (TLFVKVYMEG…KKLRIARMDK (95 aa)).

It belongs to the Aux/IAA family. In terms of assembly, homodimers and heterodimers.

It is found in the nucleus. In terms of biological role, aux/IAA proteins are short-lived transcriptional factors that function as repressors of early auxin response genes at low auxin concentrations. The sequence is that of Auxin-responsive protein IAA4 (IAA4) from Oryza sativa subsp. japonica (Rice).